The following is a 375-amino-acid chain: DNA replication and repair protein RecF (375 aa).

Residue 30-37 (GNNGSGKS) coordinates ATP.

Belongs to the RecF family.

The protein localises to the cytoplasm. Functionally, the RecF protein is involved in DNA metabolism; it is required for DNA replication and normal SOS inducibility. RecF binds preferentially to single-stranded, linear DNA. It also seems to bind ATP. The polypeptide is DNA replication and repair protein RecF (Hahella chejuensis (strain KCTC 2396)).